The primary structure comprises 340 residues: Protein RecA (340 aa).

Glycine 67 to threonine 74 is an ATP binding site.

This sequence belongs to the RecA family.

The protein localises to the cytoplasm. Its function is as follows. Can catalyze the hydrolysis of ATP in the presence of single-stranded DNA, the ATP-dependent uptake of single-stranded DNA by duplex DNA, and the ATP-dependent hybridization of homologous single-stranded DNAs. It interacts with LexA causing its activation and leading to its autocatalytic cleavage. This chain is Protein RecA, found in Mycoplasma genitalium (strain ATCC 33530 / DSM 19775 / NCTC 10195 / G37) (Mycoplasmoides genitalium).